Reading from the N-terminus, the 454-residue chain is Tumor necrosis factor receptor superfamily member 1A (454 aa).

A signal peptide spans 1–29 (MGLPTVPGLLLSLVLLALLMGIHPSGVTG). The Extracellular segment spans residues 30 to 212 (LVPSLGDREK…VTNPQDSGTA (183 aa)). TNFR-Cys repeat units follow at residues 43 to 82 (LCPQ…TVCR), 83 to 125 (ECEK…DTVC), 126 to 166 (GCKE…NTVC), and 167 to 196 (NCHA…KLCL). Disulfide bonds link C44/C58, C59/C72, C62/C81, C84/C99, C102/C117, C105/C125, C127/C143, C146/C158, C149/C166, C168/C179, C182/C195, and C185/C191. N-linked (GlcNAc...) asparagine glycosylation is present at N54. N151 carries N-linked (GlcNAc...) asparagine glycosylation. N-linked (GlcNAc...) asparagine glycosylation is present at N202. The chain crosses the membrane as a helical span at residues 213–235 (VLLPLVILLGLCLLSFIFISLMC). Over 236-454 (RYPRWRPEVY…APSSTTRLPR (219 aa)) the chain is Cytoplasmic. The interval 339–349 (VQKWEDSAHPQ) is N-SMase activation domain (NSD). Residues 356–441 (LAILYAVVDG…GCLENILEAL (86 aa)) form the Death domain. (Microbial infection) N-beta-linked (GlcNAc) arginine glycosylation occurs at R376.

As to quaternary structure, binding of TNF to the extracellular domain leads to homotrimerization. The aggregated death domains provide a novel molecular interface that interacts specifically with the death domain of TRADD. Various TRADD-interacting proteins such as TRAFS, RIPK1 and possibly FADD, are recruited to the complex by their association with TRADD. This complex activates at least two distinct signaling cascades, apoptosis and NF-kappa-B signaling. Interacts with BAG4, BABAM2, FEM1B, GRB2, SQSTM1 and TRPC4AP. Interacts with DAB2IP. Interacts directly with NOL3 (via CARD domain); inhibits TNF-signaling pathway. Interacts with SH3RF2, TRADD and RIPK1. SH3RF2 facilitates the recruitment of RIPK1 and TRADD to TNFRSF1A in a TNF-alpha-dependent process. Interacts with PGLYRP1; this interaction is important for cell death induction. Interacts (via death domain) with MADD (via death domain). (Microbial infection) Glycosylated at Arg-376 by S.typhimurium protein Ssek3: arginine GlcNAcylation prevents homotypic/heterotypic death domain interactions.

It localises to the cell membrane. The protein localises to the golgi apparatus membrane. In terms of biological role, receptor for TNFSF2/TNF-alpha and homotrimeric TNFSF1/lymphotoxin-alpha. The adapter molecule FADD recruits caspase-8 to the activated receptor. The resulting death-inducing signaling complex (DISC) performs caspase-8 proteolytic activation which initiates the subsequent cascade of caspases (aspartate-specific cysteine proteases) mediating apoptosis. This chain is Tumor necrosis factor receptor superfamily member 1A (Tnfrsf1a), found in Mus musculus (Mouse).